The sequence spans 474 residues: MMEEDIGDTEQWRHVFQELMQEVKPWHKWTLIPDKNLLPNVLKPGWTQYQQKTFARFHCPSCSRSWASGRVLIVFHMRWCEKKAKGWVKMRVFAQRCNQCPEPPFATPEVTWDNISRILNNLLFQILKKCYKEGFKQMGEIPLLGNTSLEGPHDSSNCEACLLGFCAQNDLGQASKPPAPPLSPTSSKSAREPKVTVTCSNISSSRPSSKVQMPQASKVNPQASNPTKNDPKVSCTSKPPAPPLSPTSLKSAREPKVTVTCSNISSSRPSSKVQMPQASKVNPQTSNPTKNDPKISCTSKPSTTPRLTIQQLSVVSPPAPAPTCVIQMPSPTPIDGSRAADVAKENTRSKTPKALLSSPLYVPPTSSYVPPTSSYVPPTSSYVPPTSSYVPPTSSSVIVPISSSWRLPENTICQVERNSHIHPQSQSSCCGACCESWCEIFRYSCCEAACNCMSQSPLCCLAFLILFLLLWYLL.

Topologically, residues 1–453 are cytoplasmic; sequence MMEEDIGDTE…SCCEAACNCM (453 aa). The segment at 53–164 adopts a 3CxxC-type zinc-finger fold; that stretch reads TFARFHCPSC…SSNCEACLLG (112 aa). The tract at residues 175-304 is disordered; the sequence is SKPPAPPLSP…ISCTSKPSTT (130 aa). 2 stretches are compositionally biased toward polar residues: residues 197 to 228 and 259 to 304; these read VTCSNISSSRPSSKVQMPQASKVNPQASNPTK and VTCS…PSTT. Residues 454-474 form a helical membrane-spanning segment; sequence SQSPLCCLAFLILFLLLWYLL.

The protein belongs to the TMEM7 family. Interacts with TAS2R16. As to expression, expressed predominantly in the liver. Not detected in the olfactory epithelium.

It is found in the membrane. In terms of biological role, promotes functional cell surface expression of the bitter taste receptors TAS2R16 and TAS2R43. This chain is Receptor-transporting protein 3 (Rtp3), found in Mus musculus (Mouse).